We begin with the raw amino-acid sequence, 420 residues long: Serine hydroxymethyltransferase (420 aa).

Residues leucine 121 and 125–127 each bind (6S)-5,6,7,8-tetrahydrofolate; that span reads GHL. Lysine 230 carries the post-translational modification N6-(pyridoxal phosphate)lysine. Residues glutamate 246 and 354-356 contribute to the (6S)-5,6,7,8-tetrahydrofolate site; that span reads SPF.

It belongs to the SHMT family. As to quaternary structure, homodimer. The cofactor is pyridoxal 5'-phosphate.

It is found in the cytoplasm. The catalysed reaction is (6R)-5,10-methylene-5,6,7,8-tetrahydrofolate + glycine + H2O = (6S)-5,6,7,8-tetrahydrofolate + L-serine. It functions in the pathway one-carbon metabolism; tetrahydrofolate interconversion. The protein operates within amino-acid biosynthesis; glycine biosynthesis; glycine from L-serine: step 1/1. Functionally, catalyzes the reversible interconversion of serine and glycine with tetrahydrofolate (THF) serving as the one-carbon carrier. This reaction serves as the major source of one-carbon groups required for the biosynthesis of purines, thymidylate, methionine, and other important biomolecules. Also exhibits THF-independent aldolase activity toward beta-hydroxyamino acids, producing glycine and aldehydes, via a retro-aldol mechanism. The polypeptide is Serine hydroxymethyltransferase (Rickettsia typhi (strain ATCC VR-144 / Wilmington)).